Reading from the N-terminus, the 280-residue chain is 2-dehydro-3-deoxyphosphooctonate aldolase (280 aa).

This sequence belongs to the KdsA family.

The protein localises to the cytoplasm. It carries out the reaction D-arabinose 5-phosphate + phosphoenolpyruvate + H2O = 3-deoxy-alpha-D-manno-2-octulosonate-8-phosphate + phosphate. It functions in the pathway carbohydrate biosynthesis; 3-deoxy-D-manno-octulosonate biosynthesis; 3-deoxy-D-manno-octulosonate from D-ribulose 5-phosphate: step 2/3. The protein operates within bacterial outer membrane biogenesis; lipopolysaccharide biosynthesis. The sequence is that of 2-dehydro-3-deoxyphosphooctonate aldolase from Coxiella burnetii (strain CbuK_Q154) (Coxiella burnetii (strain Q154)).